Here is a 920-residue protein sequence, read N- to C-terminus: 3-hydroxy-3-methylglutaryl-coenzyme A reductase (920 aa).

A helical membrane pass occupies residues 12 to 32 (FCASHPWEVIVALLTITACML). N37 carries an N-linked (GlcNAc...) asparagine glycan. A disordered region spans residues 62–85 (GAGSGASGTIPPSSMGGSATSSRH). Positions 71–82 (IPPSSMGGSATS) are enriched in polar residues. The 158-residue stretch at 106 to 263 (DVILMTIVRC…MTFYPACLSL (158 aa)) folds into the SSD domain. Transmembrane regions (helical) follow at residues 107-129 (VILMTIVRCTAVLYCYYQFCSLH), 136-156 (VLGIAGLFTVFSSFIFTTAII), 170-190 (LFFLLLVIDLSNSGRLAQLAL), 208-228 (LLGPAISLDTIVEVLLVGVGT), and 237-257 (VLCMFAVLSVLVNYVVFMTFY). 2 N-linked (GlcNAc...) asparagine glycosylation sites follow: N342 and N346. The chain crosses the membrane as a helical span at residues 364 to 384 (SADHIVISIVLIALVVKFICF). The interval 385–498 (DNRDPLPDQL…EEIVSIVHAG (114 aa)) is linker. 2 N-linked (GlcNAc...) asparagine glycosylation sites follow: N443 and N475. A catalytic region spans residues 499 to 829 (GTHCPLHKIE…TCTMPSLEVG (331 aa)). Catalysis depends on charge relay system residues E586, K717, and D793. 2 N-linked (GlcNAc...) asparagine glycosylation sites follow: N797 and N802. Residue H892 is the Proton donor of the active site. N-linked (GlcNAc...) asparagine glycans are attached at residues N896 and N910.

Belongs to the HMG-CoA reductase family. As to expression, highly expressed in embryonic gonadal mesoderm, where expression is initially broad, and then becomes restricted to a segmental pattern at stage 11. Expression is then further restricted to a cluster of cells in each of parasegments 10, 11 and 12, corresponding to the developing gonadal mesoderm. Not expressed in pole cells.

The protein resides in the endoplasmic reticulum membrane. The enzyme catalyses (R)-mevalonate + 2 NADP(+) + CoA = (3S)-3-hydroxy-3-methylglutaryl-CoA + 2 NADPH + 2 H(+). Its pathway is metabolic intermediate biosynthesis; (R)-mevalonate biosynthesis; (R)-mevalonate from acetyl-CoA: step 3/3. The activity of HMG-CoA-reductase is suppressed by exogenous mevalonate. Functionally, synthesis of mevalonate for the production of non-sterol isoprenoids, which are essential for growth differentiation. Provides spatial information during embryogenesis to guide migrating primordial germ cells (the pole cells) from the ectoderm to the mesoderm. Also required for association of the pole cells with the gonadal mesoderm. The chain is 3-hydroxy-3-methylglutaryl-coenzyme A reductase (Hmgcr) from Drosophila melanogaster (Fruit fly).